Consider the following 347-residue polypeptide: GMP reductase (347 aa).

NADP(+) is bound at residue 108-131; sequence ADFEKTVQILALNPALNFVCIDVA. G181 and G183 together coordinate K(+). The active-site Thioimidate intermediate is C186. 216 to 239 serves as a coordination point for NADP(+); the sequence is IVSDGGCTMPGDVAKAFGGGADFV.

This sequence belongs to the IMPDH/GMPR family. GuaC type 1 subfamily. As to quaternary structure, homotetramer.

It carries out the reaction IMP + NH4(+) + NADP(+) = GMP + NADPH + 2 H(+). Its function is as follows. Catalyzes the irreversible NADPH-dependent deamination of GMP to IMP. It functions in the conversion of nucleobase, nucleoside and nucleotide derivatives of G to A nucleotides, and in maintaining the intracellular balance of A and G nucleotides. In Salmonella paratyphi A (strain ATCC 9150 / SARB42), this protein is GMP reductase.